The following is a 61-amino-acid chain: Small ribosomal subunit protein uS14B (61 aa).

Cys24, Cys27, Cys40, and Cys43 together coordinate Zn(2+).

The protein belongs to the universal ribosomal protein uS14 family. Zinc-binding uS14 subfamily. Part of the 30S ribosomal subunit. Contacts proteins S3 and S10. Zn(2+) serves as cofactor.

Binds 16S rRNA, required for the assembly of 30S particles and may also be responsible for determining the conformation of the 16S rRNA at the A site. The protein is Small ribosomal subunit protein uS14B of Oceanobacillus iheyensis (strain DSM 14371 / CIP 107618 / JCM 11309 / KCTC 3954 / HTE831).